Here is a 76-residue protein sequence, read N- to C-terminus: RNA-binding protein KhpA (76 aa).

A KH domain is found at 29-76 (SLHIELSVHPDDMGKVIGKQGRTAKALRSVVYAAATKQKRRVRLDIID).

The protein belongs to the KhpA RNA-binding protein family. In terms of assembly, forms a complex with KhpB.

The protein resides in the cytoplasm. Functionally, a probable RNA chaperone. Forms a complex with KhpB which binds to cellular RNA and controls its expression. Plays a role in peptidoglycan (PG) homeostasis and cell length regulation. This Halalkalibacterium halodurans (strain ATCC BAA-125 / DSM 18197 / FERM 7344 / JCM 9153 / C-125) (Bacillus halodurans) protein is RNA-binding protein KhpA.